The sequence spans 51 residues: Large ribosomal subunit protein bL33 (51 aa).

The protein belongs to the bacterial ribosomal protein bL33 family.

The polypeptide is Large ribosomal subunit protein bL33 (Alteromonas mediterranea (strain DSM 17117 / CIP 110805 / LMG 28347 / Deep ecotype)).